Consider the following 270-residue polypeptide: Outer membrane protein P.IIC (270 aa).

A signal peptide spans 1 to 25 (MQPAKNLLFSSLLFSSLLFSSAARA). Topologically, residues 26–35 (ASEDGGRGPY) are extracellular. Residues 36 to 44 (VQADLAYAA) form a beta stranded membrane-spanning segment. At 45-76 (ERITHDYPKPTGTGKNKISTVSDYFRNIRTHS) the chain is on the periplasmic side. A beta stranded transmembrane segment spans residues 77–85 (VHPRVSVGY). Residues 86–89 (DFGS) lie on the Extracellular side of the membrane. A beta stranded membrane pass occupies residues 90-96 (WRIAADY). Residues 97 to 142 (ARYRKWNNNKYSVSIKELLRNDNSASGVRGHLNIQTQKTEHQENGT) lie on the Periplasmic side of the membrane. Residues 143-157 (FHAVSSLGLSTIYDF) form a beta stranded membrane-spanning segment. Residues 158–162 (DTGSR) are Extracellular-facing. A beta stranded transmembrane segment spans residues 163-173 (FKPYIGMRVAY). The Periplasmic portion of the chain corresponds to 174–221 (GHVRHQVRSVEQETEIITTYPSNGGGKVSLSSKMPPKSAHHQSNSIRR). The disordered stretch occupies residues 194 to 217 (PSNGGGKVSLSSKMPPKSAHHQSN). The beta stranded transmembrane segment at 222–234 (VGLGVIAGVGFDI) threads the bilayer. Topologically, residues 235 to 237 (TPN) are extracellular. A beta stranded transmembrane segment spans residues 238–246 (LTLDTGYRY). At 247 to 261 (HNWGRLENTRFKTHE) the chain is on the periplasmic side. A beta stranded membrane pass occupies residues 262–270 (ASLGMRYRF).

It belongs to the opacity porin family. Homotrimer.

The protein resides in the cell outer membrane. Its function is as follows. This protein serves as a porin. The protein is Outer membrane protein P.IIC (piiC) of Neisseria gonorrhoeae.